The chain runs to 245 residues: Probable phosphatase YcdX (245 aa).

9 residues coordinate Zn(2+): histidine 7, histidine 9, histidine 15, histidine 40, glutamate 73, histidine 101, histidine 131, aspartate 192, and histidine 194.

Belongs to the PHP family. As to quaternary structure, homotrimer. It depends on Zn(2+) as a cofactor.

The polypeptide is Probable phosphatase YcdX (Shigella flexneri serotype 5b (strain 8401)).